Reading from the N-terminus, the 316-residue chain is Nucleoside diphosphate-linked moiety X motif 6 (316 aa).

A Nudix hydrolase domain is found at 141–273; the sequence is SHQVGVAGAV…TSRVARLLLY (133 aa). The Nudix box signature appears at 176–197; the sequence is GLSEPEEDIGDTAVREVFEETG.

The protein belongs to the Nudix hydrolase family. In terms of assembly, monomer and homodimer. In terms of tissue distribution, detected in liver, kidney and esophagus (at protein level). Ubiquitous.

It localises to the cytoplasm. It is found in the nucleus. The protein resides in the mitochondrion. In terms of biological role, may contribute to the regulation of cell proliferation. In Homo sapiens (Human), this protein is Nucleoside diphosphate-linked moiety X motif 6 (NUDT6).